Consider the following 844-residue polypeptide: Translation elongation factor 2 (844 aa).

Residues 17-348 (RNIRNMSVIA…MIAIHLPSPV (332 aa)) enclose the tr-type G domain. 26-33 (AHVDHGKS) provides a ligand contact to GTP. Phosphothreonine occurs at positions 57 and 59. GTP contacts are provided by residues 162–165 (NKMD) and 219–221 (SGL). The residue at position 488 (Ser-488) is a Phosphoserine. His-701 carries the post-translational modification Diphthamide.

It belongs to the TRAFAC class translation factor GTPase superfamily. Classic translation factor GTPase family. EF-G/EF-2 subfamily. Phosphorylation by EF-2 kinase completely inactivates EF-2.

It is found in the cytoplasm. The enzyme catalyses GTP + H2O = GDP + phosphate + H(+). Its function is as follows. Catalyzes the GTP-dependent ribosomal translocation step during translation elongation. During this step, the ribosome changes from the pre-translocational (PRE) to the post-translocational (POST) state as the newly formed A-site-bound peptidyl-tRNA and P-site-bound deacylated tRNA move to the P and E sites, respectively. Catalyzes the coordinated movement of the two tRNA molecules, the mRNA and conformational changes in the ribosome. This chain is Translation elongation factor 2, found in Bombyx mori (Silk moth).